The following is a 165-amino-acid chain: Thiol peroxidase (165 aa).

Residues 18–165 (PQVGDNLAEF…DYDAALAALN (148 aa)) enclose the Thioredoxin domain. The active-site Cysteine sulfenic acid (-SOH) intermediate is Cys60. An intrachain disulfide couples Cys60 to Cys94.

The protein belongs to the peroxiredoxin family. Tpx subfamily. In terms of assembly, homodimer.

The catalysed reaction is a hydroperoxide + [thioredoxin]-dithiol = an alcohol + [thioredoxin]-disulfide + H2O. Functionally, thiol-specific peroxidase that catalyzes the reduction of hydrogen peroxide and organic hydroperoxides to water and alcohols, respectively. Plays a role in cell protection against oxidative stress by detoxifying peroxides. This chain is Thiol peroxidase, found in Corynebacterium glutamicum (strain ATCC 13032 / DSM 20300 / JCM 1318 / BCRC 11384 / CCUG 27702 / LMG 3730 / NBRC 12168 / NCIMB 10025 / NRRL B-2784 / 534).